Consider the following 662-residue polypeptide: U6 snRNA-specific terminal uridylyltransferase (662 aa).

Mg(2+) is bound by residues aspartate 183 and aspartate 185. Residues cysteine 384 to histidine 437 form the PAP-associated domain.

It belongs to the DNA polymerase type-B-like family. Forms a complex composed of sart-3, terminal uridylyltransferase usip-1 and U6 snRNA; complex formation is mediated by usip-1 and sart-3 binding to U6 snRNA. The cofactor is Mg(2+). It depends on Mn(2+) as a cofactor. Ubiquitously expressed.

Its subcellular location is the nucleus. The protein localises to the nucleoplasm. It carries out the reaction RNA(n) + UTP = RNA(n)-3'-uridine ribonucleotide + diphosphate. Its function is as follows. Acts as a specific terminal uridylyltransferase for U6 snRNA. Responsible for the addition of UTP at the 3' end of U6 snRNA which stabilizes U6 snRNA. Does not have activity towards modified uridine containing 3'-monophosphorylation or 2'-O-methylation. This is U6 snRNA-specific terminal uridylyltransferase from Caenorhabditis elegans.